A 1906-amino-acid chain; its full sequence is MFKKDRFSIRKIKGVVGSVFLGSLLMAPSVVDAATYHYVNKEIISQEAKDLIQTGKPDRNEVVYGLVYQKDQLPQTGTEASVLTAFGLLTVGSLLLIYKRKKIASVFLVGAMGLVVLPSAGAVDPVATLALASREGVVEMEGYRYVGYLSGDILKTLGLDTVLEETSAKPGEVTVVEVETPQSITNQEQARTENQVVETEEAPKEEAPKTEESPKEEPKSEVKPTDDTLPKVEEGKEDSAEPAPVEEVGGEVESKPEEKVAVKPESQPSDKPAEESKVEQAGEPVAPREDEKAPVEPEKQPEAPEEEKAVEETPKQEESTPDTKAEETVEPKEETVNQSIEQPKVETPAVEKQTEPTEEPKVEQAGEPVAPREDEQAPTAPVEPEKQPEVPEEEKAVEETPKPEDKIKGIGTKEPVDKSELNNQIDKASSVSPTDYSTASYNALGPVLETAKGVYASEPVKQPEVNSETNKLKTAIDALNVDKTELNNTIADAKTKVKEHYSDRSWQNLQTEVTKAEKVAANTDAKQSEVNEAVEKLTATIEKLVELSEKPILTLTSTDKKILEREAVAKYTLENQNKTKIKSITAELKKGEEVINTVVLTDDKVTTETISAAFKNLEYYKEYTLSTTMIYDRGNGEETETLENQNIQLDLKKVELKNIKRTDLIKYENGKETNESLITTIPDDKSNYYLKITSNNQKTTLLAVKNIEETTVNGTPVYKVTAIADNLVSRTADNKFEEEYVHYIEKPKVHEDNVYYNFKELVEAIQNDPSKEYRLGQSMSARNVVPNGKSYITKEFTGKLLSSEGKQFAITELEHPLFNVITNATINNVNFENVEIERSGQDNIASLANTMKGSSVITNVKITGTLSGRNNVAGFVNNMNDGTRIENVAFFGKLHSTSGNGSHTGGIAGTNYRGIVRKAYVDATITGNKTRASLLVPKVDYGLTLDHLIGTKALLTESVVKGKIDVSNPVEVGAIASKTWPVGTVSNSVSYAKIIRGEELFGSNDVDDSDYASAHIKDLYAVEGYSSGNRSFRKSKTFTKLTKEQADAKVTTFNITADKLESDLSPLAKLNEEKAYSSIQDYNAEYNQAYKNLEKLIPFYNKDYIVYQGNKLNKEHHLNTKEVLSVTAMNNNEFITNLDEANKIIVHYADGTKDYFNLSSSSEGLSNVKEYTITDLGIKYTPNIVQKDNTTLVNDIKSILESVELQSQTMYQHLNRLGDYRVNAIKDLYLEESFTDVKENLTNLITKLVQNEEHQLNDSPAARQMIRDKVEKNKAALLLGLTYLNRYYGVKFGDVNIKELMLFKPDFYGEKVSVLDRLIEIGSKENNIKGSRTFDAFGQVLAKYTKSGNLDAFLNYNRQLFTNIDNMNDWFIDATEDHVYIAERASEVEEIKNSKHRAFDNLKRSHLRNTILPLLNIDKAHLYLISNYNAIAFGSAERLGKKSLEDIKDIVNKAADGYRNYYDFWYRLASDNVKQRLLRDAVIPIWEGYNAPGGWVEKYGRYNTDKVYTPLREFFGPMDKYYNYNGTGAYAAIYPNSDDIRTDVKYVHLEMVGEYGISVYTHETTHVNDRAIYLGGFGHREGTDAEAYAQGMLQTPVTGSGFDEFGSLGINMVFKRKNDGNQWYITDPKTLKTREDINRYMKGYNDTLTLLDEIEAESVISQQNKDLNSAWFKKIDREYRDNNKLNQWDKIRNLSQEEKNELNIQSVNDLVDQQLMTNRNPGNGIYKPEAISYNDQSPYVGVRMMTGIYGGNTSKGAPGAVSFKHNAFRLWGYYGYENGFLGYASNKYKQQSKTDGESVLSDEYIIKKISNNTFNTIEEFKKAYFKEVKDKATKGLTTFEVNGSSVSSYDDLLTLFKEAVKKDAETLKQEANGNKTVSMNNTVKLKEAVYKKLLQQTNSFKTSIFK.

The N-terminal stretch at 1–33 (MFKKDRFSIRKIKGVVGSVFLGSLLMAPSVVDA) is a signal peptide. The propeptide occupies 34-76 (ATYHYVNKEIISQEAKDLIQTGKPDRNEVVYGLVYQKDQLPQT). Positions 73 to 77 (LPQTG) match the LPXTG sorting signal motif. Thr-76 carries the post-translational modification Pentaglycyl murein peptidoglycan amidated threonine. The next 2 helical transmembrane spans lie at 77–98 (GTEA…LLIY) and 105–127 (SVFL…DPVA). Over 128-1906 (TLALASREGV…TNSFKTSIFK (1779 aa)) the chain is Extracellular. Positions 178-436 (VETPQSITNQ…KASSVSPTDY (259 aa)) are disordered. The segment covering 181-196 (PQSITNQEQARTENQV) has biased composition (polar residues). Basic and acidic residues-rich tracts occupy residues 201–239 (EAPK…KEDS), 252–262 (VESKPEEKVAV), 271–335 (KPAE…KEET), 352–375 (KQTE…REDE), and 383–408 (EPEK…DKIK). 4 repeat units span residues 277 to 291 (KVEQ…REDE), 293 to 315 (APVE…ETPK), 361 to 375 (KVEQ…REDE), and 380 to 402 (APVE…ETPK). A 2 X 15 AA repeats of K-V-E-Q-A-G-E-P-V-A-P-R-E-D-E region spans residues 277 to 375 (KVEQAGEPVA…GEPVAPREDE (99 aa)). Residues 293 to 375 (APVEPEKQPE…GEPVAPREDE (83 aa)) form a 2 X 23 AA approximate repeats region. Polar residues predominate over residues 421-436 (LNNQIDKASSVSPTDY). Residue His-1562 coordinates Zn(2+). Glu-1563 is an active-site residue. Zn(2+) is bound by residues His-1566 and Glu-1586.

The protein belongs to the peptidase M26 family. Requires Zn(2+) as cofactor. Post-translationally, the Gram-positive cell-wall anchor motif LPXTG is located in the N-terminal part, in contrast to such motifs in other known streptococcal and staphylococcal proteins. The protease could be cleaved by the sortase and anchored in the membrane via the two potential N-terminal transmembrane domains, whereas the propeptide located prior to the LPXTG motif would remain attached to the cell wall peptidoglycan by an amide bond.

The protein localises to the secreted. It localises to the cell wall. Its subcellular location is the membrane. Functionally, is a virulence factor capable of inducing inflammation in the lower respiratory tract, by increasing tumor necrosis factor alpha (TNF-alpha) concentration in the lungs. Also appears to have other functions important in virulence in models of pneumonia and septicemia. The polypeptide is Zinc metalloprotease ZmpB (zmpB) (Streptococcus pneumoniae serotype 4 (strain ATCC BAA-334 / TIGR4)).